Reading from the N-terminus, the 508-residue chain is Maturase K (508 aa).

The protein belongs to the intron maturase 2 family. MatK subfamily.

The protein localises to the plastid. It localises to the chloroplast. Its function is as follows. Usually encoded in the trnK tRNA gene intron. Probably assists in splicing its own and other chloroplast group II introns. In Ranunculus trichophyllus (Whitewater crowfoot), this protein is Maturase K.